A 476-amino-acid chain; its full sequence is uncharacterized protein (476 aa).

Belongs to the herpesviridae US22 family.

This is an uncharacterized protein from Homo sapiens (Human).